Here is a 348-residue protein sequence, read N- to C-terminus: Protein RecA (348 aa).

Residue 64-71 participates in ATP binding; that stretch reads GPESSGKT. Positions 325-335 are enriched in basic and acidic residues; it reads YEIDGSNKEPL. The tract at residues 325–348 is disordered; it reads YEIDGSNKEPLDEGEETLSLLDDE. A compositionally biased stretch (acidic residues) spans 336–348; it reads DEGEETLSLLDDE.

This sequence belongs to the RecA family.

Its subcellular location is the cytoplasm. Can catalyze the hydrolysis of ATP in the presence of single-stranded DNA, the ATP-dependent uptake of single-stranded DNA by duplex DNA, and the ATP-dependent hybridization of homologous single-stranded DNAs. It interacts with LexA causing its activation and leading to its autocatalytic cleavage. This is Protein RecA from Listeria monocytogenes serotype 4b (strain CLIP80459).